A 69-amino-acid polypeptide reads, in one-letter code: Large ribosomal subunit protein uL29 (69 aa).

The protein belongs to the universal ribosomal protein uL29 family.

The sequence is that of Large ribosomal subunit protein uL29 from Carboxydothermus hydrogenoformans (strain ATCC BAA-161 / DSM 6008 / Z-2901).